The primary structure comprises 162 residues: UPF0262 protein Pden_1958 (162 aa).

The tract at residues 1–22 is disordered; sequence MSQSANRLCRIDIDDSALPPPS.

It belongs to the UPF0262 family.

The sequence is that of UPF0262 protein Pden_1958 from Paracoccus denitrificans (strain Pd 1222).